The sequence spans 309 residues: HPr kinase/phosphorylase (309 aa).

Active-site residues include His-138 and Lys-159. 153–160 contacts ATP; sequence GQSGVGKS. Mg(2+) is bound at residue Ser-160. Asp-177 functions as the Proton acceptor; for phosphorylation activity. Proton donor; for dephosphorylation activity in the catalytic mechanism. Residues 201–210 are important for the catalytic mechanism of both phosphorylation and dephosphorylation; it reads LEIRGLGIIN. Glu-202 provides a ligand contact to Mg(2+). Arg-243 is an active-site residue. Residues 264–269 form an important for the catalytic mechanism of dephosphorylation region; that stretch reads PVRPGR.

This sequence belongs to the HPrK/P family. In terms of assembly, homohexamer. It depends on Mg(2+) as a cofactor.

It catalyses the reaction [HPr protein]-L-serine + ATP = [HPr protein]-O-phospho-L-serine + ADP + H(+). The enzyme catalyses [HPr protein]-O-phospho-L-serine + phosphate + H(+) = [HPr protein]-L-serine + diphosphate. In terms of biological role, catalyzes the ATP- as well as the pyrophosphate-dependent phosphorylation of a specific serine residue in HPr, a phosphocarrier protein of the phosphoenolpyruvate-dependent sugar phosphotransferase system (PTS). HprK/P also catalyzes the pyrophosphate-producing, inorganic phosphate-dependent dephosphorylation (phosphorolysis) of seryl-phosphorylated HPr (P-Ser-HPr). The two antagonistic activities of HprK/P are regulated by several intracellular metabolites, which change their concentration in response to the absence or presence of rapidly metabolisable carbon sources (glucose, fructose, etc.) in the growth medium. Also phosphorylates/dephosphorylates the HPr-like catabolite repression protein crh on a specific serine residue. Therefore, by controlling the phosphorylation state of HPr and crh, HPrK/P is a sensor enzyme that plays a major role in the regulation of carbon metabolism and sugar transport: it mediates carbon catabolite repression (CCR), and regulates PTS-catalyzed carbohydrate uptake and inducer exclusion. The chain is HPr kinase/phosphorylase from Bacillus cereus (strain G9842).